Reading from the N-terminus, the 456-residue chain is MTKVVEISPTTRLEGHSKLTLKVDDQGIVERGDWLSITPVRGIEKLAIGKTMEQVPKIASRVCGICPIAHTLASTEAMEASIGCEIPTDAKLLRTILHAANRIHSIALHNILILPDFYIPGTEKKFNLFANEQPARSVMARIVRIREIAQTIGAIAGGEAIHPSNPRIGGMYYNVSPRAKQKMADLAKEGLVLVHEQMEFMFDVIRNMQNREFVEVAGKQIPLPKKLGYHNQGVMATASMYGSSSLDDNPTWDFTRWKETRPWDWYMGEVTIDLEDPSYPIGGTTKIGTKANPQMEACTGVPTYDGQPVEVGPRARLATFKNFDEKGTFAQHIARQMEYPDCCYTILRCLDNLNTSGKVLADHIPQGDGSMGWAANEAPRGSNIHLARVKDGKVLWYDMLVPTTWNFPTCSRALTGAPWQIAEMVVRAYDPCVSCATHMIVVNEEEKIVTQKLMQW.

Positions 63, 66, 432, and 435 each coordinate Ni(2+).

It belongs to the [NiFe]/[NiFeSe] hydrogenase large subunit family. As to quaternary structure, pentamer of two alpha chains, two beta chains and a gamma chain. It depends on Ni(2+) as a cofactor. Requires iron-sulfur cluster as cofactor. FAD is required as a cofactor.

It localises to the cell membrane. It carries out the reaction oxidized coenzyme F420-(gamma-L-Glu)(n) + H2 + H(+) = reduced coenzyme F420-(gamma-L-Glu)(n). Reduces the physiological low-potential two-electron acceptor coenzyme F420, and the artificial one-electron acceptor methylviologen. The protein is Coenzyme F420 hydrogenase subunit alpha (frhA) of Methanosarcina barkeri (strain Fusaro / DSM 804).